An 86-amino-acid polypeptide reads, in one-letter code: Cytochrome c oxidase subunit 6B1 (86 aa).

Ala2 carries the N-acetylalanine modification. The CHCH domain occupies 27 to 73 (TRNCWQNYLDFHRCEKAMTAKGGDVSVCEWYRRVYKSLCPISWVSTW). The Cx9C motif motif lies at 30 to 40 (CWQNYLDFHRC). 2 disulfide bridges follow: Cys30/Cys65 and Cys40/Cys54. The Cx10C motif signature appears at 54-65 (CEWYRRVYKSLC). Lys62 carries the N6-acetyllysine modification.

This sequence belongs to the cytochrome c oxidase subunit 6B family. Component of the cytochrome c oxidase (complex IV, CIV), a multisubunit enzyme composed of 14 subunits. The complex is composed of a catalytic core of 3 subunits MT-CO1, MT-CO2 and MT-CO3, encoded in the mitochondrial DNA, and 11 supernumerary subunits COX4I, COX5A, COX5B, COX6A, COX6B, COX6C, COX7A, COX7B, COX7C, COX8 and NDUFA4, which are encoded in the nuclear genome. The complex exists as a monomer or a dimer and forms supercomplexes (SCs) in the inner mitochondrial membrane with NADH-ubiquinone oxidoreductase (complex I, CI) and ubiquinol-cytochrome c oxidoreductase (cytochrome b-c1 complex, complex III, CIII), resulting in different assemblies (supercomplex SCI(1)III(2)IV(1) and megacomplex MCI(2)III(2)IV(2)).

It is found in the mitochondrion inner membrane. Its pathway is energy metabolism; oxidative phosphorylation. Its function is as follows. Component of the cytochrome c oxidase, the last enzyme in the mitochondrial electron transport chain which drives oxidative phosphorylation. The respiratory chain contains 3 multisubunit complexes succinate dehydrogenase (complex II, CII), ubiquinol-cytochrome c oxidoreductase (cytochrome b-c1 complex, complex III, CIII) and cytochrome c oxidase (complex IV, CIV), that cooperate to transfer electrons derived from NADH and succinate to molecular oxygen, creating an electrochemical gradient over the inner membrane that drives transmembrane transport and the ATP synthase. Cytochrome c oxidase is the component of the respiratory chain that catalyzes the reduction of oxygen to water. Electrons originating from reduced cytochrome c in the intermembrane space (IMS) are transferred via the dinuclear copper A center (CU(A)) of subunit 2 and heme A of subunit 1 to the active site in subunit 1, a binuclear center (BNC) formed by heme A3 and copper B (CU(B)). The BNC reduces molecular oxygen to 2 water molecules using 4 electrons from cytochrome c in the IMS and 4 protons from the mitochondrial matrix. The chain is Cytochrome c oxidase subunit 6B1 (COX6B1) from Carlito syrichta (Philippine tarsier).